An 86-amino-acid chain; its full sequence is Small ribosomal subunit protein bS20 (86 aa).

Positions Met1 to Met27 are disordered.

Belongs to the bacterial ribosomal protein bS20 family.

Functionally, binds directly to 16S ribosomal RNA. The chain is Small ribosomal subunit protein bS20 from Vibrio atlanticus (strain LGP32) (Vibrio splendidus (strain Mel32)).